Reading from the N-terminus, the 161-residue chain is 3-hydroxyacyl-[acyl-carrier-protein] dehydratase FabZ (161 aa).

Residue His-66 is part of the active site.

It belongs to the thioester dehydratase family. FabZ subfamily.

It localises to the cytoplasm. It catalyses the reaction a (3R)-hydroxyacyl-[ACP] = a (2E)-enoyl-[ACP] + H2O. Its function is as follows. Involved in unsaturated fatty acids biosynthesis. Catalyzes the dehydration of short chain beta-hydroxyacyl-ACPs and long chain saturated and unsaturated beta-hydroxyacyl-ACPs. In Gluconacetobacter diazotrophicus (strain ATCC 49037 / DSM 5601 / CCUG 37298 / CIP 103539 / LMG 7603 / PAl5), this protein is 3-hydroxyacyl-[acyl-carrier-protein] dehydratase FabZ.